A 166-amino-acid polypeptide reads, in one-letter code: NADPH-dependent 7-cyano-7-deazaguanine reductase (166 aa).

Cys-57 functions as the Thioimide intermediate in the catalytic mechanism. The Proton donor role is filled by Asp-64. Substrate-binding positions include 79-81 (VES) and 98-99 (HE).

This sequence belongs to the GTP cyclohydrolase I family. QueF type 1 subfamily.

The protein resides in the cytoplasm. It carries out the reaction 7-aminomethyl-7-carbaguanine + 2 NADP(+) = 7-cyano-7-deazaguanine + 2 NADPH + 3 H(+). Its pathway is tRNA modification; tRNA-queuosine biosynthesis. Its function is as follows. Catalyzes the NADPH-dependent reduction of 7-cyano-7-deazaguanine (preQ0) to 7-aminomethyl-7-deazaguanine (preQ1). The sequence is that of NADPH-dependent 7-cyano-7-deazaguanine reductase from Staphylococcus aureus (strain JH1).